The sequence spans 514 residues: 2,3-bisphosphoglycerate-independent phosphoglycerate mutase (514 aa).

Residues Asp14 and Ser64 each coordinate Mn(2+). Residue Ser64 is the Phosphoserine intermediate of the active site. Substrate is bound by residues His125, 155–156 (RD), Arg187, Arg193, 263–266 (RADR), and Lys336. Positions 403, 407, 444, 445, and 463 each coordinate Mn(2+).

It belongs to the BPG-independent phosphoglycerate mutase family. In terms of assembly, monomer. The cofactor is Mn(2+).

The catalysed reaction is (2R)-2-phosphoglycerate = (2R)-3-phosphoglycerate. It functions in the pathway carbohydrate degradation; glycolysis; pyruvate from D-glyceraldehyde 3-phosphate: step 3/5. Its function is as follows. Catalyzes the interconversion of 2-phosphoglycerate and 3-phosphoglycerate. This is 2,3-bisphosphoglycerate-independent phosphoglycerate mutase from Shigella dysenteriae serotype 1 (strain Sd197).